The chain runs to 94 residues: Conotoxin Im026 (94 aa).

The first 24 residues, 1–24 (MRLTTMHSVILMLLLVFAFDNVDG), serve as a signal peptide directing secretion. Residues 25 to 59 (DEPGQTARDVDNRNFMSILRSEGKPVHFLRAIKKR) constitute a propeptide that is removed on maturation.

Contains 4 disulfide bonds. Expressed by the venom duct.

The protein localises to the secreted. Probable neurotoxin. This Conus imperialis (Imperial cone) protein is Conotoxin Im026.